Consider the following 376-residue polypeptide: Chaperone protein DnaJ (376 aa).

In terms of domain architecture, J spans 5–70 (DYYEVLGVAK…QKRAAYDQYG (66 aa)). A CR-type zinc finger spans residues 136–214 (GYDTQIRVPS…CHGSGKVKET (79 aa)). Zn(2+) is bound by residues Cys-149, Cys-152, Cys-166, Cys-169, Cys-188, Cys-191, Cys-202, and Cys-205. 4 CXXCXGXG motif repeats span residues 149-156 (CGVCHGSG), 166-173 (CPTCHGQG), 188-195 (CPKCHGTG), and 202-209 (CAHCHGSG).

Belongs to the DnaJ family. As to quaternary structure, homodimer. The cofactor is Zn(2+).

The protein localises to the cytoplasm. In terms of biological role, participates actively in the response to hyperosmotic and heat shock by preventing the aggregation of stress-denatured proteins and by disaggregating proteins, also in an autonomous, DnaK-independent fashion. Unfolded proteins bind initially to DnaJ; upon interaction with the DnaJ-bound protein, DnaK hydrolyzes its bound ATP, resulting in the formation of a stable complex. GrpE releases ADP from DnaK; ATP binding to DnaK triggers the release of the substrate protein, thus completing the reaction cycle. Several rounds of ATP-dependent interactions between DnaJ, DnaK and GrpE are required for fully efficient folding. Also involved, together with DnaK and GrpE, in the DNA replication of plasmids through activation of initiation proteins. The chain is Chaperone protein DnaJ from Burkholderia mallei (strain NCTC 10229).